A 703-amino-acid polypeptide reads, in one-letter code: Meiotic coiled-coil protein 2 (703 aa).

Polar residues-rich tracts occupy residues 1–19 (MQSIDLRLPSTSANHSISE) and 245–258 (TNVRYSNSKPSTPL). 3 disordered regions span residues 1–29 (MQSIDLRLPSTSANHSISESLEHSKSELN), 245–265 (TNVRYSNSKPSTPLSPEDVDL), and 284–309 (ASTNNLSTNTSGTLKPYSLSSSRSSS). The region spanning 331–686 (NPSVIPESTS…KVAYLVEKWN (356 aa)) is the PUM-HD domain. Pumilio repeat units lie at residues 361–396 (NVIIDKIIVSNDQQSSIFLQQKLKISSYDMKQNIVD), 397–432 (SIISQIHPLMLNRFGNFLVQRCFEHGTAPQIRQMGS), 433–468 (AMLGNMLKLATDPFGCHVVQKAIDNVTEDIKLAMMD), 469–504 (ELFLTIDVTIMHHYACHVWQKLFETQWYEYPVNVMN), 509–544 (ALRGKWHEVAVGENGSLVVQNMFENCVEKDKRECIE), 545–580 (EIIFHLDGIARGQWGNWVVQHMVENGQGEDLKRVID), 581–616 (ALLNRAVEFSIDQFASKVIEKAIKSGPKNFISLYLK), and 625–660 (RTRQPLIDIASDQYGNYLIQQIIQLGQPAEKNLVIT).

The chain is Meiotic coiled-coil protein 2 (mcp2) from Schizosaccharomyces pombe (strain 972 / ATCC 24843) (Fission yeast).